A 467-amino-acid polypeptide reads, in one-letter code: tRNA modification GTPase MnmE (467 aa).

Arg25, Glu87, and Lys130 together coordinate (6S)-5-formyl-5,6,7,8-tetrahydrofolate. In terms of domain architecture, TrmE-type G spans 226–389 (GLSVVLAGQP…LRGELLRIAG (164 aa)). Asn236 contributes to the K(+) binding site. GTP contacts are provided by residues 236–241 (NVGKSS), 255–261 (TPIAGTT), and 280–283 (DTAG). Mg(2+) is bound at residue Ser240. Residues Thr255, Ile257, and Thr260 each contribute to the K(+) site. A Mg(2+)-binding site is contributed by Thr261. (6S)-5-formyl-5,6,7,8-tetrahydrofolate is bound at residue Lys467.

Belongs to the TRAFAC class TrmE-Era-EngA-EngB-Septin-like GTPase superfamily. TrmE GTPase family. As to quaternary structure, homodimer. Heterotetramer of two MnmE and two MnmG subunits. The cofactor is K(+).

The protein localises to the cytoplasm. In terms of biological role, exhibits a very high intrinsic GTPase hydrolysis rate. Involved in the addition of a carboxymethylaminomethyl (cmnm) group at the wobble position (U34) of certain tRNAs, forming tRNA-cmnm(5)s(2)U34. The chain is tRNA modification GTPase MnmE from Burkholderia mallei (strain NCTC 10247).